The sequence spans 117 residues: Large ribosomal subunit protein bL20 (117 aa).

This sequence belongs to the bacterial ribosomal protein bL20 family.

Binds directly to 23S ribosomal RNA and is necessary for the in vitro assembly process of the 50S ribosomal subunit. It is not involved in the protein synthesizing functions of that subunit. The polypeptide is Large ribosomal subunit protein bL20 (Natranaerobius thermophilus (strain ATCC BAA-1301 / DSM 18059 / JW/NM-WN-LF)).